Here is an 856-residue protein sequence, read N- to C-terminus: MGRKLDLSGLTDDETEHVLQVVQRDFNLRKKEEDRLSEMKQRLAEENSKCSILSKHQKFVERCCMRCCSPFTFLVNARRRCGECKFSVCKSCCSYQKHEKLWVCCVCQQARLLRTQSLEWFYNNVKTRFKRFGSAKVLKNLYKKHRLESGACFDILGGGLYEPNLENEGSISGSDSTFYRQSEGHSMMDTLAVALQVAEEAIEEAISKAESQRDSLDKQNEASYLRDHRQELAEELAGTILQRIIRKQKDKADLHAEEEEPECTRPQSSGVKARGEGTAAPPGRHKARAALWRSQSAFSFTTEDTLKTSSAEAAPRQPKDRAQRLLEESALPSWRSMDGLDGKNLVPLLQSPDGNWMTLKDSSRQPPTRLLAKPKSRTFQALEVASSVASAYDELGSDSEEDFDYSEALSKLRPPSQGRLKQPQPQPAQAQSSGQGPLATSPSNPEAMCSDSETSSTSSSREAGCRAKLLWLQRKAPKNPSAEKTHLQGELDVNFNPQAAGGETSDSSDPEETLHTADRRARRWRRARVGPEESNRGLPSPSAYPPALHTAQVSDNVSETDISNEAQNSRSSTDSAEEKLRNRLYELAMKMSEKETSSGEDQESESKTEPKNQKGSLSSEENNQGVQEELKKKCSAVSLCNISTEVLKVINATEELIAESAGPWEIPPVSTDRDNGMFPLGTDQRSLDKQLTSLEENVYLAAGTVYGLEGQLSELEDAARCIHSSTGETELADLEDQVAAAAAQVHHAELQISDIESRISALTIAGLNIAPCVRLTRRRDQKQRSQVQTIDTSRQQRRKLPAPPVKAEKIEASSVTPIKTFNRNFLLQGSSTNRPTASTSNTKDLMEPVLESAVMY.

Positions K4 to N124 constitute a RabBD domain. The FYVE-type zinc finger occupies C63–C105. The tract at residues K143 to T560 is myosin-binding. The PKA-binding stretch occupies residues V193 to A209. The interval L232–Q248 is negative regulation of PKA-binding. A disordered region spans residues K251–A287. S299 is modified (phosphoserine). The span at T302–A311 shows a compositional bias: polar residues. 6 disordered regions span residues T302–Q323, Q350–S376, Y392–E578, S592–G625, R778–V805, and L826–L845. S351 is subject to Phosphoserine. Residues L395–Y405 show a composition bias toward acidic residues. Low complexity-rich tracts occupy residues P427–P437 and S450–S460. Residues F495–Y856 form an actin-binding region. Composition is skewed to polar residues over residues A551–D574, Q613–G625, R784–S793, and L826–K843.

In terms of assembly, binds MYO5A, MYO7A and F-actin. Binds RAB27A that has been activated by GTP-binding via its N-terminus. Interacts with PRKAR2A. Interacts with components of the exocyst complex, including EXOC3 and EXOC4.

The protein localises to the cytoplasm. It localises to the perinuclear region. The protein resides in the cytoplasmic vesicle. It is found in the secretory vesicle. Its subcellular location is the melanosome. Functionally, rab effector protein involved in melanosome transport. Serves as link between melanosome-bound RAB27A and the motor proteins MYO5A and MYO7A. May link RAB27A-containing vesicles to actin filaments. Functions as a protein kinase A-anchoring protein (AKAP). May act as a scaffolding protein that links PKA to components of the exocytosis machinery, thus facilitating exocytosis, including insulin release. The protein is Rab effector MyRIP (Myrip) of Rattus norvegicus (Rat).